A 1152-amino-acid polypeptide reads, in one-letter code: Autotransporter adhesin BpaC (1152 aa).

The signal sequence occupies residues 1-71; it reads MNRIFKSIWC…PFAEEAMAAN (71 aa). A surface exposed passenger domain region spans residues 72–1061; the sequence is NAGVCLTYNG…VGQLNSAVSG (990 aa). Disordered regions lie at residues 420–886 and 900–949; these read GLQG…AGAT and TATG…ESAA. Positions 427-442 are enriched in polar residues; the sequence is ANTGTASGDNSTASGD. Over residues 443–504 the composition is skewed to low complexity; that stretch reads NATASGTNST…ANGTNSTASG (62 aa). The span at 505 to 519 shows a compositional bias: polar residues; it reads DNSTASGTNASATGE. Residues 520 to 588 are compositionally biased toward low complexity; it reads NSTATGTDST…ANGTNSTASG (69 aa). The span at 589–603 shows a compositional bias: polar residues; that stretch reads DNSTASGTNASATGE. The segment covering 604–630 has biased composition (low complexity); that stretch reads NSTATGTDSTASGSNSTANGTNSTASG. The span at 631 to 645 shows a compositional bias: polar residues; the sequence is DNSTASGTNASATGE. Positions 646-672 are enriched in low complexity; it reads NSTATGTDSTASGSNSTANGTNSTASG. Over residues 673-687 the composition is skewed to polar residues; sequence DNSTASGTNASATGE. Low complexity predominate over residues 688–714; sequence NSTATGTDSTASGSNSTANGTNSTASG. The segment covering 715–729 has biased composition (polar residues); it reads DNSTASGTNASATGE. The span at 730–756 shows a compositional bias: low complexity; the sequence is NSTATGTDSTASGSNSTANGANSTASG. Residues 757–771 show a composition bias toward polar residues; it reads DNSTASGTNASATGE. 2 stretches are compositionally biased toward low complexity: residues 772–840 and 848–886; these read NSTA…TASG and TNASATGENSTATGTASTASGSNSTANGANSTASGAGAT. An outer membrane translocation of the passenger domain region spans residues 1062–1099; the sequence is IRNQMDGMQGQIDTLARDAYSGIAAATALTMIPDVDPG. Positions 1100–1152 are translocator domain; the sequence is KTLAVGIGTANFKGYQASALGATARITQNLKVKTGVSYSGSNYVWGAGMSYQW.

The protein belongs to the autotransporter-2 (AT-2) (TC 1.B.40) family. In terms of assembly, homotrimer.

The protein resides in the cell surface. It is found in the cell outer membrane. In terms of biological role, involved in virulence. Mediates adherence to human respiratory epithelial cells. This is Autotransporter adhesin BpaC from Burkholderia pseudomallei (strain 1026b).